A 247-amino-acid polypeptide reads, in one-letter code: 2,3-bisphosphoglycerate-dependent phosphoglycerate mutase (247 aa).

Substrate-binding positions include 8–15 (RHGESTWN), 21–22 (TG), arginine 60, 87–90 (ERHY), lysine 98, 114–115 (RR), and 183–184 (GN). The Tele-phosphohistidine intermediate role is filled by histidine 9. Glutamate 87 functions as the Proton donor/acceptor in the catalytic mechanism.

It belongs to the phosphoglycerate mutase family. BPG-dependent PGAM subfamily. As to quaternary structure, homodimer.

It catalyses the reaction (2R)-2-phosphoglycerate = (2R)-3-phosphoglycerate. The protein operates within carbohydrate degradation; glycolysis; pyruvate from D-glyceraldehyde 3-phosphate: step 3/5. In terms of biological role, catalyzes the interconversion of 2-phosphoglycerate and 3-phosphoglycerate. The protein is 2,3-bisphosphoglycerate-dependent phosphoglycerate mutase of Methylibium petroleiphilum (strain ATCC BAA-1232 / LMG 22953 / PM1).